The following is a 100-amino-acid chain: Urease subunit gamma (100 aa).

This sequence belongs to the urease gamma subunit family. As to quaternary structure, heterotrimer of UreA (gamma), UreB (beta) and UreC (alpha) subunits. Three heterotrimers associate to form the active enzyme.

The protein resides in the cytoplasm. The enzyme catalyses urea + 2 H2O + H(+) = hydrogencarbonate + 2 NH4(+). It functions in the pathway nitrogen metabolism; urea degradation; CO(2) and NH(3) from urea (urease route): step 1/1. Its function is as follows. Ureolysis may allow urea to be employed as a nitrogen source for growth and produces ammonia which may protect from killing at low pH. The polypeptide is Urease subunit gamma (Streptococcus salivarius (strain 57.I)).